The primary structure comprises 403 residues: S-adenosylmethionine synthase (403 aa).

H16 contributes to the ATP binding site. D18 contacts Mg(2+). Residue E44 coordinates K(+). Positions 57 and 100 each coordinate L-methionine. Residues 100 to 110 (QSSDIAQGVDR) form a flexible loop region. Residues 165–167 (DAK), D242, 248–249 (RK), A265, and K269 contribute to the ATP site. D242 contributes to the L-methionine binding site. Position 273 (K273) interacts with L-methionine.

The protein belongs to the AdoMet synthase family. As to quaternary structure, homotetramer; dimer of dimers. It depends on Mg(2+) as a cofactor. K(+) is required as a cofactor.

It is found in the cytoplasm. The enzyme catalyses L-methionine + ATP + H2O = S-adenosyl-L-methionine + phosphate + diphosphate. It functions in the pathway amino-acid biosynthesis; S-adenosyl-L-methionine biosynthesis; S-adenosyl-L-methionine from L-methionine: step 1/1. Catalyzes the formation of S-adenosylmethionine (AdoMet) from methionine and ATP. The overall synthetic reaction is composed of two sequential steps, AdoMet formation and the subsequent tripolyphosphate hydrolysis which occurs prior to release of AdoMet from the enzyme. The chain is S-adenosylmethionine synthase from Nitrosococcus oceani (strain ATCC 19707 / BCRC 17464 / JCM 30415 / NCIMB 11848 / C-107).